We begin with the raw amino-acid sequence, 177 residues long: Ferritin light chain, oocyte isoform (177 aa).

In terms of domain architecture, Ferritin-like diiron spans 9–158 (QNYHEESEAG…DHLTNLRRVK (150 aa)). Fe cation is bound by residues Glu26, His64, and Glu106.

The protein belongs to the ferritin family. As to quaternary structure, oligomer of 24 subunits. There are two types of subunits: L (light) chain and H (heavy) chain. The functional molecule is roughly spherical and contains a central cavity into which the insoluble mineral iron core is deposited.

Its function is as follows. Stores iron in a soluble, non-toxic, readily available form. Important for iron homeostasis. Iron is taken up in the ferrous form and deposited as ferric hydroxides after oxidation. This Xenopus laevis (African clawed frog) protein is Ferritin light chain, oocyte isoform.